A 769-amino-acid polypeptide reads, in one-letter code: Calcium up-regulated protein B (769 aa).

Positions 1–22 (MINIEDISKSSNQSEEKQLKST) are disordered. 2 Ricin B-type lectin domains span residues 25 to 145 (KPKY…WTTF) and 158 to 296 (FQSK…WITN).

The protein belongs to the cup family.

Its subcellular location is the cytoplasm. It is found in the membrane. May play an important role in stabilizing and/or regulating the cell membrane during Ca(2+) stress or certain stages of development. This chain is Calcium up-regulated protein B (cupB), found in Dictyostelium discoideum (Social amoeba).